We begin with the raw amino-acid sequence, 176 residues long: Large ribosomal subunit protein eL20 (176 aa).

The protein belongs to the eukaryotic ribosomal protein eL20 family. As to quaternary structure, component of the large ribosomal subunit.

Its subcellular location is the cytoplasm. In terms of biological role, component of the large ribosomal subunit. The ribosome is a large ribonucleoprotein complex responsible for the synthesis of proteins in the cell. This chain is Large ribosomal subunit protein eL20 (rpl18a), found in Salmo salar (Atlantic salmon).